Reading from the N-terminus, the 338-residue chain is Isopentenyl-diphosphate delta-isomerase (338 aa).

13–14 (RK) lines the substrate pocket. FMN-binding positions include 72–74 (AMT), serine 102, and asparagine 130. 102 to 104 (SQR) contributes to the substrate binding site. Glutamine 165 provides a ligand contact to substrate. Glutamate 166 serves as a coordination point for Mg(2+). FMN contacts are provided by residues lysine 197, threonine 227, 274–276 (GIR), and 295–296 (AR).

It belongs to the IPP isomerase type 2 family. In terms of assembly, homooctamer. Dimer of tetramers. It depends on FMN as a cofactor. Requires NADPH as cofactor. Mg(2+) serves as cofactor.

Its subcellular location is the cytoplasm. It catalyses the reaction isopentenyl diphosphate = dimethylallyl diphosphate. Involved in the biosynthesis of isoprenoids. Catalyzes the 1,3-allylic rearrangement of the homoallylic substrate isopentenyl (IPP) to its allylic isomer, dimethylallyl diphosphate (DMAPP). The sequence is that of Isopentenyl-diphosphate delta-isomerase from Deinococcus radiodurans (strain ATCC 13939 / DSM 20539 / JCM 16871 / CCUG 27074 / LMG 4051 / NBRC 15346 / NCIMB 9279 / VKM B-1422 / R1).